A 209-amino-acid chain; its full sequence is Probable L-serine dehydratase, alpha chain (209 aa).

Belongs to the iron-sulfur dependent L-serine dehydratase family. As to quaternary structure, heterodimer of an alpha chain and a beta chain. [4Fe-4S] cluster is required as a cofactor.

It catalyses the reaction L-serine = pyruvate + NH4(+). It functions in the pathway carbohydrate biosynthesis; gluconeogenesis. This chain is Probable L-serine dehydratase, alpha chain (sdhA), found in Latilactobacillus sakei (Lactobacillus sakei).